Consider the following 185-residue polypeptide: ATP-dependent protease subunit HslV (185 aa).

Thr14 is an active-site residue. Residues Ala168, Cys171, and Thr174 each coordinate Na(+).

It belongs to the peptidase T1B family. HslV subfamily. As to quaternary structure, a double ring-shaped homohexamer of HslV is capped on each side by a ring-shaped HslU homohexamer. The assembly of the HslU/HslV complex is dependent on binding of ATP.

It localises to the cytoplasm. It carries out the reaction ATP-dependent cleavage of peptide bonds with broad specificity.. Its activity is regulated as follows. Allosterically activated by HslU binding. Its function is as follows. Protease subunit of a proteasome-like degradation complex believed to be a general protein degrading machinery. This is ATP-dependent protease subunit HslV from Hyphomonas neptunium (strain ATCC 15444).